A 224-amino-acid chain; its full sequence is RNA-free ribonuclease P (224 aa).

Belongs to the HARP family.

It carries out the reaction Endonucleolytic cleavage of RNA, removing 5'-extranucleotides from tRNA precursor.. Its function is as follows. RNA-free RNase P that catalyzes the removal of the 5'-leader sequence from pre-tRNA to produce the mature 5'-terminus. The polypeptide is RNA-free ribonuclease P (Haloarcula marismortui (strain ATCC 43049 / DSM 3752 / JCM 8966 / VKM B-1809) (Halobacterium marismortui)).